Here is a 281-residue protein sequence, read N- to C-terminus: 4-hydroxy-3-methylbut-2-enyl diphosphate reductase (281 aa).

Cys-12 contacts [4Fe-4S] cluster. The (2E)-4-hydroxy-3-methylbut-2-enyl diphosphate site is built by His-41 and His-74. The dimethylallyl diphosphate site is built by His-41 and His-74. Residues His-41 and His-74 each coordinate isopentenyl diphosphate. Cys-96 serves as a coordination point for [4Fe-4S] cluster. His-124 is a (2E)-4-hydroxy-3-methylbut-2-enyl diphosphate binding site. His-124 lines the dimethylallyl diphosphate pocket. His-124 provides a ligand contact to isopentenyl diphosphate. Catalysis depends on Glu-126, which acts as the Proton donor. Thr-164 is a (2E)-4-hydroxy-3-methylbut-2-enyl diphosphate binding site. Cys-193 is a binding site for [4Fe-4S] cluster. Residues Ser-221, Asn-223, and Ser-265 each contribute to the (2E)-4-hydroxy-3-methylbut-2-enyl diphosphate site. Residues Ser-221, Asn-223, and Ser-265 each coordinate dimethylallyl diphosphate. Residues Ser-221, Asn-223, and Ser-265 each coordinate isopentenyl diphosphate.

It belongs to the IspH family. The cofactor is [4Fe-4S] cluster.

The catalysed reaction is isopentenyl diphosphate + 2 oxidized [2Fe-2S]-[ferredoxin] + H2O = (2E)-4-hydroxy-3-methylbut-2-enyl diphosphate + 2 reduced [2Fe-2S]-[ferredoxin] + 2 H(+). It carries out the reaction dimethylallyl diphosphate + 2 oxidized [2Fe-2S]-[ferredoxin] + H2O = (2E)-4-hydroxy-3-methylbut-2-enyl diphosphate + 2 reduced [2Fe-2S]-[ferredoxin] + 2 H(+). The protein operates within isoprenoid biosynthesis; dimethylallyl diphosphate biosynthesis; dimethylallyl diphosphate from (2E)-4-hydroxy-3-methylbutenyl diphosphate: step 1/1. Its pathway is isoprenoid biosynthesis; isopentenyl diphosphate biosynthesis via DXP pathway; isopentenyl diphosphate from 1-deoxy-D-xylulose 5-phosphate: step 6/6. Catalyzes the conversion of 1-hydroxy-2-methyl-2-(E)-butenyl 4-diphosphate (HMBPP) into a mixture of isopentenyl diphosphate (IPP) and dimethylallyl diphosphate (DMAPP). Acts in the terminal step of the DOXP/MEP pathway for isoprenoid precursor biosynthesis. The chain is 4-hydroxy-3-methylbut-2-enyl diphosphate reductase from Oleidesulfovibrio alaskensis (strain ATCC BAA-1058 / DSM 17464 / G20) (Desulfovibrio alaskensis).